Here is a 530-residue protein sequence, read N- to C-terminus: Glucose-6-phosphate 1-dehydrogenase (530 aa).

Residues 53 to 60, arginine 87, tyrosine 162, and lysine 186 each bind NADP(+); that span reads GASGDLAK. Residues lysine 186, 216 to 220, glutamate 254, and aspartate 273 each bind D-glucose 6-phosphate; that span reads HYLGK. Histidine 278 (proton acceptor) is an active-site residue. Arginine 372 serves as a coordination point for NADP(+). D-glucose 6-phosphate-binding residues include lysine 375 and arginine 380. Residues lysine 381, arginine 385, and arginine 408 each coordinate NADP(+). Position 410 (glutamine 410) interacts with D-glucose 6-phosphate. NADP(+) contacts are provided by residues 416–418, 436–438, arginine 502, tyrosine 518, and tryptophan 524; these read YAK and DLT.

It belongs to the glucose-6-phosphate dehydrogenase family.

It localises to the cytoplasm. The protein localises to the cytosol. It catalyses the reaction D-glucose 6-phosphate + NADP(+) = 6-phospho-D-glucono-1,5-lactone + NADPH + H(+). The protein operates within carbohydrate degradation; pentose phosphate pathway; D-ribulose 5-phosphate from D-glucose 6-phosphate (oxidative stage): step 1/3. Functionally, cytosolic glucose-6-phosphate dehydrogenase that catalyzes the first and rate-limiting step of the oxidative branch within the pentose phosphate pathway/shunt, an alternative route to glycolysis for the dissimilation of carbohydrates and a major source of reducing power and metabolic intermediates for fatty acid and nucleic acid biosynthetic processes. The protein is Glucose-6-phosphate 1-dehydrogenase (g6pd) of Takifugu rubripes (Japanese pufferfish).